We begin with the raw amino-acid sequence, 324 residues long: MSSDNSKQDKQIEKTAAQKISKFGSFVAGGLAACIAVTVTNPIELIKIRMQLQGEMSASAAKVYKNPIQGMAVIFKNEGIKGLQKGLNAAYIYQIGLNGSRLGFYEPIRSSLNQLFFPDQEPHKVQSVGVNVFSGAASGIIGAVIGSPLFLVKTRLQSYSEFIKIGEQTHYTGVWNGLVTIFKTEGVKGLFRGIDAAILRTGAGSSVQLPIYNTAKNILVKNDLMKDGPALHLTASTISGLGVAVVMNPWDVILTRIYNQKGDLYKGPIDCLVKTVRIEGVTALYKGFAAQVFRIAPHTIMCLTFMEQTMKLVYSIESRVLGHN.

Solcar repeat units lie at residues 20–111, 126–218, and 227–312; these read ISKF…IRSS, QSVG…AKNI, and DGPA…TMKL. 6 helical membrane passes run 26–46, 79–99, 132–152, 193–213, 233–253, and 284–305; these read FVAG…IELI, GIKG…GLNG, VFSG…LFLV, GIDA…PIYN, LTAS…WDVI, and LYKG…CLTF.

It belongs to the mitochondrial carrier (TC 2.A.29) family.

It is found in the mitochondrion inner membrane. The catalysed reaction is a dicarboxylate(in) + sulfate(out) = a dicarboxylate(out) + sulfate(in). It catalyses the reaction (2S)-2-isopropylmalate(in) + sulfate(out) = (2S)-2-isopropylmalate(out) + sulfate(in). The enzyme catalyses (2R,3S)-3-isopropylmalate(in) + sulfate(out) = (2R,3S)-3-isopropylmalate(out) + sulfate(in). It carries out the reaction malonate(in) + sulfate(out) = malonate(out) + sulfate(in). The catalysed reaction is oxaloacetate(in) + sulfate(out) = oxaloacetate(out) + sulfate(in). It catalyses the reaction thiosulfate(in) + sulfate(out) = thiosulfate(out) + sulfate(in). With respect to regulation, inhibited by alpha-keto isocaproate, an intermediate of leucine biosynthesis pathway. Its function is as follows. Antiporter that exchanges dicarboxylates and sulfur oxoanions across the inner membrane of mitochondria. Exports alpha-isopropylmalate from mitochondrial matrix to the cytosol, where it serves as a precursor for leucine biosynthesis. The protein is Mitochondrial oxaloacetate transport protein (OAC1) of Saccharomyces cerevisiae (strain ATCC 204508 / S288c) (Baker's yeast).